The primary structure comprises 151 residues: MFRGANAINLDAKGRLAMPSRYRDELDSRSAGQLIVTIDAVDPCLCLYPLSEWELIEAKLRDLATFREENRRLQRLLIGNAVDLELDGSGRFLVPPRLREYAKLDKRVMLVGQLNKFQLWDEDAWNALADADLAAIQKPGAMPDELRDLIL.

2 consecutive SpoVT-AbrB domains span residues 5–52 (ANAI…PLSE) and 81–124 (AVDL…DEDA).

Belongs to the MraZ family. As to quaternary structure, forms oligomers.

The protein localises to the cytoplasm. It localises to the nucleoid. The sequence is that of Transcriptional regulator MraZ from Pseudomonas syringae pv. syringae (strain B728a).